Consider the following 333-residue polypeptide: 4-hydroxy-3-methylbut-2-enyl diphosphate reductase (333 aa).

Position 33 (cysteine 33) interacts with [4Fe-4S] cluster. Histidine 62 and histidine 95 together coordinate (2E)-4-hydroxy-3-methylbut-2-enyl diphosphate. Residues histidine 62 and histidine 95 each coordinate dimethylallyl diphosphate. 2 residues coordinate isopentenyl diphosphate: histidine 62 and histidine 95. Cysteine 117 provides a ligand contact to [4Fe-4S] cluster. Histidine 145 contacts (2E)-4-hydroxy-3-methylbut-2-enyl diphosphate. Histidine 145 contacts dimethylallyl diphosphate. Isopentenyl diphosphate is bound at residue histidine 145. Catalysis depends on glutamate 147, which acts as the Proton donor. Threonine 186 serves as a coordination point for (2E)-4-hydroxy-3-methylbut-2-enyl diphosphate. Residue cysteine 216 coordinates [4Fe-4S] cluster. (2E)-4-hydroxy-3-methylbut-2-enyl diphosphate is bound by residues serine 244, serine 245, asparagine 246, and serine 289. Dimethylallyl diphosphate-binding residues include serine 244, serine 245, asparagine 246, and serine 289. Isopentenyl diphosphate contacts are provided by serine 244, serine 245, asparagine 246, and serine 289.

It belongs to the IspH family. Requires [4Fe-4S] cluster as cofactor.

It carries out the reaction isopentenyl diphosphate + 2 oxidized [2Fe-2S]-[ferredoxin] + H2O = (2E)-4-hydroxy-3-methylbut-2-enyl diphosphate + 2 reduced [2Fe-2S]-[ferredoxin] + 2 H(+). The catalysed reaction is dimethylallyl diphosphate + 2 oxidized [2Fe-2S]-[ferredoxin] + H2O = (2E)-4-hydroxy-3-methylbut-2-enyl diphosphate + 2 reduced [2Fe-2S]-[ferredoxin] + 2 H(+). It functions in the pathway isoprenoid biosynthesis; dimethylallyl diphosphate biosynthesis; dimethylallyl diphosphate from (2E)-4-hydroxy-3-methylbutenyl diphosphate: step 1/1. Its pathway is isoprenoid biosynthesis; isopentenyl diphosphate biosynthesis via DXP pathway; isopentenyl diphosphate from 1-deoxy-D-xylulose 5-phosphate: step 6/6. Catalyzes the conversion of 1-hydroxy-2-methyl-2-(E)-butenyl 4-diphosphate (HMBPP) into a mixture of isopentenyl diphosphate (IPP) and dimethylallyl diphosphate (DMAPP). Acts in the terminal step of the DOXP/MEP pathway for isoprenoid precursor biosynthesis. In Corynebacterium diphtheriae (strain ATCC 700971 / NCTC 13129 / Biotype gravis), this protein is 4-hydroxy-3-methylbut-2-enyl diphosphate reductase.